A 423-amino-acid polypeptide reads, in one-letter code: MSEDHGKDYTLESDSELRFEIEQKDAKVLVSLVSGFAELFGTELVKKKQYEFGVGAKVAIFTYQGCVLHVSGKMDVCYISKETPMVQYVNCHAALEQFRMEAEEKDRYGPVAMVVGPMDVGKSTLCRILLNYAVRVGRRPLYADLDVGQGSIAISGSVATILIERPANVEEGFAKTAPLVYHFGHKSPSGNSVLYNAVVSKMAEVTLQSLNSNKRTKSSGIIINTCGWVKGSGYAHLLHAAKAYGACAIFVLDQERLYNELLRDVPKEVHVVLLPKSGGVVERSKELRHEARDQRIKEYFYGNARAPFYPFSFEVKFQDLRLYKIGAPPLPDSCMPIGMKAEDNKTKVVAVTPTPALIHHVLALSFAESVEDDVIGTNVAGFCCVTEVDMERQAVMLLSPQPRPLPPNALLLWSELQFMDNHT.

ATP contacts are provided by residues Glu16, Lys57, and 119-124 (DVGKST).

Belongs to the Clp1 family. Clp1 subfamily.

The protein localises to the nucleus. In terms of biological role, required for endonucleolytic cleavage during polyadenylation-dependent pre-mRNA 3'-end formation. This is Protein CLP1 homolog (cbc) from Drosophila sechellia (Fruit fly).